The sequence spans 656 residues: Methionine--tRNA ligase (656 aa).

Positions 13-23 match the 'HIGH' region motif; that stretch reads YYPSGNLHIGH. Positions 308-312 match the 'KMSKS' region motif; it reads KMSKS. Lysine 311 contributes to the ATP binding site. Residues 556–656 form the tRNA-binding domain; that stretch reads DFDKVEIKAA…SAIPNGAVIK (101 aa).

It belongs to the class-I aminoacyl-tRNA synthetase family. MetG type 2B subfamily. In terms of assembly, homodimer.

It is found in the cytoplasm. The catalysed reaction is tRNA(Met) + L-methionine + ATP = L-methionyl-tRNA(Met) + AMP + diphosphate. Is required not only for elongation of protein synthesis but also for the initiation of all mRNA translation through initiator tRNA(fMet) aminoacylation. This is Methionine--tRNA ligase from Staphylococcus epidermidis (strain ATCC 12228 / FDA PCI 1200).